Reading from the N-terminus, the 430-residue chain is Enolase (430 aa).

(2R)-2-phosphoglycerate is bound at residue glutamine 163. The active-site Proton donor is the glutamate 205. Positions 242, 287, and 314 each coordinate Mg(2+). (2R)-2-phosphoglycerate-binding residues include lysine 339, arginine 368, serine 369, and lysine 390. Lysine 339 (proton acceptor) is an active-site residue.

It belongs to the enolase family. Requires Mg(2+) as cofactor.

It localises to the cytoplasm. The protein resides in the secreted. The protein localises to the cell surface. The catalysed reaction is (2R)-2-phosphoglycerate = phosphoenolpyruvate + H2O. It functions in the pathway carbohydrate degradation; glycolysis; pyruvate from D-glyceraldehyde 3-phosphate: step 4/5. Its function is as follows. Catalyzes the reversible conversion of 2-phosphoglycerate (2-PG) into phosphoenolpyruvate (PEP). It is essential for the degradation of carbohydrates via glycolysis. In Geobacillus kaustophilus (strain HTA426), this protein is Enolase.